The primary structure comprises 799 residues: Leucine--tRNA ligase (799 aa).

Residues 39 to 50 (PYPSGAGLHMGH) carry the 'HIGH' region motif. The short motif at 575 to 579 (KMSKS) is the 'KMSKS' region element. Lys-578 lines the ATP pocket.

It belongs to the class-I aminoacyl-tRNA synthetase family.

It localises to the cytoplasm. It catalyses the reaction tRNA(Leu) + L-leucine + ATP = L-leucyl-tRNA(Leu) + AMP + diphosphate. This chain is Leucine--tRNA ligase, found in Malacoplasma penetrans (strain HF-2) (Mycoplasma penetrans).